The chain runs to 195 residues: Small ribosomal subunit protein uS4B (195 aa).

The S4 RNA-binding domain maps to 107–181 (RRLQTQVYKL…VARRNAARKA (75 aa)). The disordered stretch occupies residues 161–195 (TSPFGGARPGRVARRNAARKAEASGEAAEEAEDEE). A Glycyl lysine isopeptide (Lys-Gly) (interchain with G-Cter in ubiquitin) cross-link involves residue Lys-180. Phosphoserine is present on Ser-184.

The protein belongs to the universal ribosomal protein uS4 family. Component of the small ribosomal subunit (SSU). Mature yeast ribosomes consist of a small (40S) and a large (60S) subunit. The 40S small subunit contains 1 molecule of ribosomal RNA (18S rRNA) and 33 different proteins (encoded by 57 genes). The large 60S subunit contains 3 rRNA molecules (25S, 5.8S and 5S rRNA) and 46 different proteins (encoded by 81 genes). Interacts with snoRNA U3. uS11 interacts with MPP10. Component of the ribosomal small subunit (SSU) processome composed of at least 40 protein subunits and snoRNA U3.

It is found in the cytoplasm. The protein resides in the nucleus. The protein localises to the nucleolus. Component of the ribosome, a large ribonucleoprotein complex responsible for the synthesis of proteins in the cell. The small ribosomal subunit (SSU) binds messenger RNAs (mRNAs) and translates the encoded message by selecting cognate aminoacyl-transfer RNA (tRNA) molecules. The large subunit (LSU) contains the ribosomal catalytic site termed the peptidyl transferase center (PTC), which catalyzes the formation of peptide bonds, thereby polymerizing the amino acids delivered by tRNAs into a polypeptide chain. The nascent polypeptides leave the ribosome through a tunnel in the LSU and interact with protein factors that function in enzymatic processing, targeting, and the membrane insertion of nascent chains at the exit of the ribosomal tunnel. uS4 is involved in nucleolar processing of pre-18S ribosomal RNA and ribosome assembly. This Saccharomyces cerevisiae (strain ATCC 204508 / S288c) (Baker's yeast) protein is Small ribosomal subunit protein uS4B.